A 273-amino-acid polypeptide reads, in one-letter code: Protein FAM210A (273 aa).

The disordered stretch occupies residues 95 to 116 (VLSSSSTSQETPSEKKEEPDPL). Residues 106 to 116 (PSEKKEEPDPL) are compositionally biased toward basic and acidic residues. One can recognise a DUF1279 domain in the interval 118 to 230 (DKSISLYQRF…GYMSTPPPVK (113 aa)). A helical membrane pass occupies residues 138–158 (LIPVHLITSGIWFGTFYYASI). Positions 233 to 272 (LQGRMEETKELISEKMEETKDRLTEKLQETKEKVSFKKKV) form a coiled coil. Residues 247 to 273 (KMEETKDRLTEKLQETKEKVSFKKKVE) form a disordered region.

Belongs to the FAM210 family. As to quaternary structure, interacts with ATAD3A.

The protein resides in the membrane. It localises to the mitochondrion. The protein localises to the cytoplasm. In terms of biological role, may play a role in the structure and strength of both muscle and bone. This chain is Protein FAM210A (Fam210a), found in Rattus norvegicus (Rat).